Reading from the N-terminus, the 1134-residue chain is Nck-associated protein 1-like (1134 aa).

The disordered stretch occupies residues 638-671 (KAKNKKSMKQRQAPRKGEPERDKPGAESHRKNRS). Residues 639-651 (AKNKKSMKQRQAP) show a composition bias toward basic residues. Positions 652-666 (RKGEPERDKPGAESH) are enriched in basic and acidic residues. A helical transmembrane segment spans residues 999-1019 (LLLIFLAVSLPLLATDPSSFF).

In terms of assembly, in hematopoietic cells, component of the WAVE2 complex composed of ABI1, CYFIP1/SRA1, NCKAP1L/HEM1 and WASF2/WAVE2. Interacts with ARHGAP4, PIK3C3/VPS34 and PPP1R12A/MYPT1. Interacts with mammalian target of rapamycin complex 2 (mTORC2) components, including MTOR and RICTOR. In terms of tissue distribution, predominantly expressed in developing and mature hematopoietic cells. Also detected in urogenital tissues, including testis.

It is found in the membrane. It localises to the cytoplasm. Essential hematopoietic-specific regulator of the actin cytoskeleton. Controls lymphocyte development, activation, proliferation and homeostasis, erythrocyte membrane stability, as well as phagocytosis and migration by neutrophils and macrophages. Component of the WAVE2 complex which signals downstream of RAC to stimulate F-actin polymerization. Required for stabilization and/or translation of the WAVE2 complex proteins in hematopoietic cells. Within the WAVE2 complex, enables the cortical actin network to restrain excessive degranulation and granule release by T-cells. Required for efficient T-lymphocyte and neutrophil migration. Exhibits complex cycles of activation and inhibition to generate waves of propagating the assembly with actin. Also involved in mechanisms WAVE independent to regulate myosin and actin polymerization during neutrophil chemotaxis. In T-cells, required for proper mechanistic target of rapamycin complex 2 (mTORC2)-dependent AKT phosphorylation, cell proliferation and cytokine secretion, including that of IL2 and TNF. This chain is Nck-associated protein 1-like, found in Mus musculus (Mouse).